We begin with the raw amino-acid sequence, 259 residues long: Imidazole glycerol phosphate synthase subunit HisF (259 aa).

Catalysis depends on residues aspartate 11 and aspartate 130.

This sequence belongs to the HisA/HisF family. As to quaternary structure, heterodimer of HisH and HisF.

It is found in the cytoplasm. It carries out the reaction 5-[(5-phospho-1-deoxy-D-ribulos-1-ylimino)methylamino]-1-(5-phospho-beta-D-ribosyl)imidazole-4-carboxamide + L-glutamine = D-erythro-1-(imidazol-4-yl)glycerol 3-phosphate + 5-amino-1-(5-phospho-beta-D-ribosyl)imidazole-4-carboxamide + L-glutamate + H(+). It participates in amino-acid biosynthesis; L-histidine biosynthesis; L-histidine from 5-phospho-alpha-D-ribose 1-diphosphate: step 5/9. Its function is as follows. IGPS catalyzes the conversion of PRFAR and glutamine to IGP, AICAR and glutamate. The HisF subunit catalyzes the cyclization activity that produces IGP and AICAR from PRFAR using the ammonia provided by the HisH subunit. This chain is Imidazole glycerol phosphate synthase subunit HisF, found in Polaromonas sp. (strain JS666 / ATCC BAA-500).